We begin with the raw amino-acid sequence, 154 residues long: Transcriptional repressor NrdR (154 aa).

The segment at 3-34 is a zinc-finger region; sequence CPTCKYNGTRVVDSRPADDGNSIRRRRECEKC. The region spanning 49–139 is the ATP-cone domain; that stretch reads LIVVKKDGAR…VYRQFKDISV (91 aa).

Belongs to the NrdR family. Zn(2+) is required as a cofactor.

In terms of biological role, negatively regulates transcription of bacterial ribonucleotide reductase nrd genes and operons by binding to NrdR-boxes. The protein is Transcriptional repressor NrdR of Listeria welshimeri serovar 6b (strain ATCC 35897 / DSM 20650 / CCUG 15529 / CIP 8149 / NCTC 11857 / SLCC 5334 / V8).